Consider the following 325-residue polypeptide: ATP phosphoribosyltransferase (325 aa).

The protein belongs to the ATP phosphoribosyltransferase family. Long subfamily. It depends on Mg(2+) as a cofactor.

Its subcellular location is the cytoplasm. The enzyme catalyses 1-(5-phospho-beta-D-ribosyl)-ATP + diphosphate = 5-phospho-alpha-D-ribose 1-diphosphate + ATP. The protein operates within amino-acid biosynthesis; L-histidine biosynthesis; L-histidine from 5-phospho-alpha-D-ribose 1-diphosphate: step 1/9. With respect to regulation, feedback inhibited by histidine. Its function is as follows. Catalyzes the condensation of ATP and 5-phosphoribose 1-diphosphate to form N'-(5'-phosphoribosyl)-ATP (PR-ATP). Has a crucial role in the pathway because the rate of histidine biosynthesis seems to be controlled primarily by regulation of HisG enzymatic activity. The protein is ATP phosphoribosyltransferase of Afipia carboxidovorans (strain ATCC 49405 / DSM 1227 / KCTC 32145 / OM5) (Oligotropha carboxidovorans).